Reading from the N-terminus, the 1261-residue chain is Apoptotic protease-activating factor 1 (1261 aa).

The 90-residue stretch at 1-90 (MEERARSRLL…GDLASLLHSD (90 aa)) folds into the CARD domain. One can recognise an NB-ARC domain in the interval 106–417 (VSPSVQAILS…LELEEVEDVL (312 aa)). Residue 154–161 (GMAGSGKS) coordinates ATP. WD repeat units lie at residues 615-654 (PHQG…KLLE), 657-696 (AHEE…LIRE), 700-743 (EHEE…SQNT), 746-785 (GHME…EWKS), 798-836 (EIKA…LLLK), 840-879 (SRLS…KKAE), 882-921 (GHLS…TSSA), 964-1003 (ELSS…ASVK), 1006-1045 (GHTK…CMVL), 1047-1088 (GHME…MLQD), 1091-1130 (CHEG…MLFL), 1133-1172 (GHKD…LLKI), and 1184-1223 (YHAG…QTFY).

As to quaternary structure, monomer. Oligomerizes upon binding of cytochrome c and dATP.

The protein localises to the cytoplasm. In terms of biological role, oligomeric Apaf-1 mediates the cytochrome c-dependent autocatalytic activation of pro-caspase-9 (Apaf-3), leading to the activation of caspase-3 and apoptosis. This activation requires ATP. The protein is Apoptotic protease-activating factor 1 (apaf1) of Danio rerio (Zebrafish).